A 2510-amino-acid chain; its full sequence is MAPGRTDVTVAENGNGLHTAHNGVSNGTSNGTNGTSHTSNGTNSSAKTTSNGVHSHEDIPIAIVGMGLRLPGGIGTEEDLWDTLINKKDQRQRVPADRWNVDAFYSKTNKRGTVKTEHGYFLADEDLQQFDTSFFSITRNELEKLDPQHRLLLEVTRECLENAGELDWRGKDIGCYVGVFGEDWLDLHAKDSQDFGIYRITGAGDFVLANRISYEYDLKGPSITVKTACSSALICLHMACDAIRSGEISSAIVGGANLLMSPTMTIAMSEQGVLSGDGSCKTFDAAADGYARAEAVNALYVKRLDHAIRDGNPIRGIVRGTGSNCDGKTAGLSHPSPESHEALIRRTYQQAGIDDFCQTAFVECHGTGTATGDPLETSAIGNVFGEKGVYITSVKPNVGHSEGASGITSCIKAILAMEKKTIPPNIKFNNPNPQIPFKKAKLQVPVEPTPWPQDRQERVSINAFGIGGANAHAVIDSAESYGVNSMRATRSSTEPLRQSLVVFSSNHMNSARNGTANLQKYLTKHPGSVKDLAYTTGVRRERLPYRSFAVSDGSAPLEFTAPSRTPATTPGVTFVFTGQGAQWATMGVNLLEEFPSAEEDFKNLDKALSQLPYPPSWSIADELLRSKEESRLDQAEFSQPLCTAVQVVIVNLLRAWNISPSRVIGHSSGELAAAYASGAITAAEAIIGAYYRGLVTKQQARPGAMAAVGFGREDVASYLTEGVTIACENSPESTTLSGDADKIDAVIAKIKESHPDVLARRLRVEMAYHSYHMADVGTRYQELLEPHVSSTRPDVPFYSTVLEKVITEKSAMNASYWRRNMESPVLFNTTMAKLLTDECANNLFLEIGPHSALAGPLRQIFKKHQPDALYVPTLVRGQNDTTSLLSTAGNLFVKGLAVDIGAVNDGGSILTDLPTYPWHHEDTFWDESRLTREWRKRKFPRHDLLGCQVFEGSSLEPTWRNMLCLEDVPWIRDHVIGPDIVFPGAGYIAMAGEAIRQVADAQDYTVRNLSVKSAMILHEPVTTEILFSLRPHRLTTSLDSAWYEFTVSSHNGTGWTKHCTGQVKAGRADSGSVSEPPQATTLPRKVSSTRWYQTMSKVGINYGPTFQGLEDVSAHPVNNFAVAKVTNTVDPNESTYQLHPTTTDYAIQLFSVAAWKGQARDFVQMPLPAYFGEVYMKRPQTNEQLQLSSNVTVTARGAVHGDGFATVGGEVVLEFRNLRLAPAADDTGGDDQDPHAGVRLQWKPDVAFLDSKDLIRTTKSIRSCYPTVQRLLLLCSIECTERLASLPPSGVEHLEKFKTWLAAHVEQAKADGYEAVDDVNSLFALSRDDRLSLIETTAQEVKASYAEAVGNAICRVFENVEGIFTSEADALDLLMQDDILRKIYDLVIEFWDFKDFLGLVSHDKPNLKVLEIGAGTGATTALILDGLVSELGEQMFYSYTYTDISAGFFVQAKERFKNVHSIEYAVLDISQDPAEQGFELGSYDLVIATNVLHATPSLQETLVNVRKLLQPKGKLMLQELCSSTKWFNFIVGVLPGWWLGEPDGRPEEPYVGPERWARELTQAGFDGAEAVIYDEEKPYHTNATIIAHPLVEPKVNKKISILTTDPNGAAATLLAQSLTRQNFMVDFCSFQDAPQSDHDIISVLDLEGRPFLADISADKFHSLQTFITKLSSSGMLWLTKSAQMNSSEPEYAQIVGLARSVRNELSIDLATVEMDNTQDETTFNRVINILSKFQNRSKNLDIDPEFEYAISNGVINISRFHWISVSNELAAGTDSTAPKTLEIGKRGSLKTLRWVQRSEIKLIGDEVAVEVRAAGMNFKDILISMGIVDGNVDDGNGLGCECAGVVTQVGPDAPFHVGDRVAIIGGDSYSTVLKTTSTLCARIPDNLSFEDAATMPCVYTTVIHSLLDLAKIEKDQTVLIQSACGGIGIAAINICRMIFATVGSQEKIDYLMSTFGIPRNHIFNSRNSSFLPDVMRETSGVGVDVVLNSLSGDLLHASWKCVAEFGKMVEIGKRDFIGQGKLAMEAFEANRTFYGVDFAPIAEKRPYIIKRLLERTMEFFRLGAIQPIRPIKFFDATQIEDALRYMQKGQHMGKLVIQFPTDHSQLTSSRGNNRLVLRSDASYLLVGGLGGLGRSISTWMVEHGARHFIYLSRSGGKGPDDAAFVQEMNAAGCTVQITAGSVANLADVQRAINQAEYPVAGVLQMSMVLRDASFPNMTHDEWQAANLPKIKGTWNLHEAFASQPLDFFVLFSSFSGLLGHWGQANYAAANTFLDAFAQYRHGLGLPASVLDISIIEDVGWVSQEPGHLEQLKATAAYCLKEQHLLDSLELAITKSAPQTWEPKSPMDGYMNASQIGLGMRMTMPIAADANRCIWKRDIRMGLYRNLENSGVDDAGTGNEGLREFLTGVTTNPESLKEPSSVSFLANEIGSTLFSFLMRPIEELDVKQPLSAVGLDSLVAIELRNWSRQRLGVELSVLEILGAASIEKLGEAAAEGLLVKLGGATTNGDAQ.

The tract at residues 1-54 (MAPGRTDVTVAENGNGLHTAHNGVSNGTSNGTNGTSHTSNGTNSSAKTTSNGVH) is disordered. The span at 22 to 45 (NGVSNGTSNGTNGTSHTSNGTNSS) shows a compositional bias: low complexity. The 420-residue stretch at 58-477 (DIPIAIVGMG…GANAHAVIDS (420 aa)) folds into the Ketosynthase family 3 (KS3) domain. Catalysis depends on for beta-ketoacyl synthase activity residues C229, H365, and H400. Residues 574-880 (FVFTGQGAQW…VPTLVRGQND (307 aa)) form a malonyl-CoA:ACP transacylase (MAT) domain region. The interval 942 to 1070 (HDLLGCQVFE…GQVKAGRADS (129 aa)) is N-terminal hotdog fold. Residues 942–1226 (HDLLGCQVFE…NLRLAPAADD (285 aa)) form a dehydratase (DH) domain region. The 288-residue stretch at 942 to 1229 (HDLLGCQVFE…LAPAADDTGG (288 aa)) folds into the PKS/mFAS DH domain. The Proton acceptor; for dehydratase activity role is filled by H974. The C-terminal hotdog fold stretch occupies residues 1083–1229 (PRKVSSTRWY…LAPAADDTGG (147 aa)). The active-site Proton donor; for dehydratase activity is D1144. A methyltransferase (CMet) domain region spans residues 1395–1574 (DFLGLVSHDK…FDGAEAVIYD (180 aa)). The tract at residues 1787-2097 (GSLKTLRWVQ…KGQHMGKLVI (311 aa)) is enoyl reductase (ER) (ER) domain. The tract at residues 2122–2296 (SYLLVGGLGG…ASVLDISIIE (175 aa)) is ketoreductase (KR) domain. Positions 2419-2496 (SSVSFLANEI…KLGEAAAEGL (78 aa)) constitute a Carrier domain. O-(pantetheine 4'-phosphoryl)serine is present on S2456.

It participates in mycotoxin biosynthesis. Functionally, highly reducing polyketide synthase; part of the gene cluster that mediates the biosynthesis of 1233A, a natural compound known as an inhibitor of HMG-CoA synthase in the mevalonate pathway and with antibacterial and antifungal activities. The highly reducing polyketide synthase g433 gene is responsible for the 1233A backbone biosynthesis and the cytochrome P450 monooxygenase g430 catalyzes oxidation of the backbone. This Fusarium sp protein is Highly reducing polyketide synthase g433.